The following is a 373-amino-acid chain: Flagellar P-ring protein (373 aa).

Positions 1–26 (MRLLFRFLTLVAVLAMSLADVAPAWA) are cleaved as a signal peptide.

Belongs to the FlgI family. As to quaternary structure, the basal body constitutes a major portion of the flagellar organelle and consists of four rings (L,P,S, and M) mounted on a central rod.

The protein localises to the periplasm. It localises to the bacterial flagellum basal body. In terms of biological role, assembles around the rod to form the L-ring and probably protects the motor/basal body from shearing forces during rotation. This Rhizobium etli (strain CIAT 652) protein is Flagellar P-ring protein.